A 122-amino-acid polypeptide reads, in one-letter code: Non-specific lipid-transfer protein (122 aa).

Positions 1 to 19 are cleaved as a signal peptide; the sequence is MGVSRACFVVMVVVYMVVA. Residues 20-29 constitute a propeptide that is removed on maturation; that stretch reads ATPNVKLAEA. 4 disulfide bridges follow: Cys-32/Cys-81, Cys-42/Cys-58, Cys-59/Cys-104, and Cys-79/Cys-118.

In terms of assembly, monomer.

Plant non-specific lipid-transfer proteins transfer phospholipids as well as galactolipids across membranes. May play a role in wax or cutin deposition in the cell walls of expanding epidermal cells and certain secretory tissues. Binds saturated fatty acids, unsaturated fatty acids, lysolipids and, with highest efficiency, jasmonic acid. Has weak antimicrobial activity against fungi. Inhibits spore germination and hyphae elongation in A.niger VKM F-2259 and N.crassa VKM F-184. Has no antibacterial activity against A.tumefaciens A281, C.michiganensis VKM Ac-144 and P.syringae VKM B-1546. This chain is Non-specific lipid-transfer protein, found in Anethum graveolens (Dill).